Here is a 92-residue protein sequence, read N- to C-terminus: Small ribosomal subunit protein bS18B (92 aa).

It belongs to the bacterial ribosomal protein bS18 family. As to quaternary structure, part of the 30S ribosomal subunit. Forms a tight heterodimer with protein bS6.

In terms of biological role, binds as a heterodimer with protein bS6 to the central domain of the 16S rRNA, where it helps stabilize the platform of the 30S subunit. The chain is Small ribosomal subunit protein bS18B from Cupriavidus pinatubonensis (strain JMP 134 / LMG 1197) (Cupriavidus necator (strain JMP 134)).